The primary structure comprises 259 residues: MGHHGQMHAQHGVTMPADSPTGQPDRSEQRYFPATAFRTRRSTLSDAQRQTWDRRWPELGLSVGPAEDPDRPGPPLDTDAWFGRKAPVVLEIGCGNGTSTLAMAKQEPGVDVIAVEVYRRGLAQLLCAIDRDNVTNIRLIRGNALDVLQRLIAPASLTGVRVFFPDPWPKARHHKRRFLQPGTVGLIADRLLPGGVLHVATDHAGYAEHIADVGAGEPRLRPADPDSPLPISVARPTTKYETKAQDAGSAVTEFIWLRR.

Residues 1 to 74 (MGHHGQMHAQ…PAEDPDRPGP (74 aa)) form a disordered region. 4 residues coordinate S-adenosyl-L-methionine: Glu91, Glu116, Asn143, and Asp166. The active site involves Asp166. Residues Lys170, Asp202, and 238–241 (TKYE) each bind substrate.

It belongs to the class I-like SAM-binding methyltransferase superfamily. TrmB family.

It catalyses the reaction guanosine(46) in tRNA + S-adenosyl-L-methionine = N(7)-methylguanosine(46) in tRNA + S-adenosyl-L-homocysteine. It participates in tRNA modification; N(7)-methylguanine-tRNA biosynthesis. Its function is as follows. Catalyzes the formation of N(7)-methylguanine at position 46 (m7G46) in tRNA. The sequence is that of tRNA (guanine-N(7)-)-methyltransferase from Mycobacterium avium (strain 104).